A 291-amino-acid chain; its full sequence is Small ribosomal subunit protein uS2 (291 aa).

The disordered stretch occupies residues 256–291 (LRGEGTAPAASEEQPAEEPAPAAAEAQTDAAVGTAV). The span at 261–291 (TAPAASEEQPAEEPAPAAAEAQTDAAVGTAV) shows a compositional bias: low complexity.

This sequence belongs to the universal ribosomal protein uS2 family.

The chain is Small ribosomal subunit protein uS2 from Frankia alni (strain DSM 45986 / CECT 9034 / ACN14a).